Consider the following 176-residue polypeptide: Inorganic pyrophosphatase (176 aa).

Substrate contacts are provided by Lys-30, Arg-44, and Tyr-56. Asp-66, Asp-71, and Asp-103 together coordinate Mg(2+). Tyr-142 lines the substrate pocket.

This sequence belongs to the PPase family. Homohexamer. Mg(2+) is required as a cofactor.

The protein resides in the cytoplasm. It carries out the reaction diphosphate + H2O = 2 phosphate + H(+). Functionally, catalyzes the hydrolysis of inorganic pyrophosphate (PPi) forming two phosphate ions. This chain is Inorganic pyrophosphatase, found in Vibrio vulnificus (strain CMCP6).